Here is a 185-residue protein sequence, read N- to C-terminus: Ribosome-recycling factor (185 aa).

The protein belongs to the RRF family.

Its subcellular location is the cytoplasm. Responsible for the release of ribosomes from messenger RNA at the termination of protein biosynthesis. May increase the efficiency of translation by recycling ribosomes from one round of translation to another. The sequence is that of Ribosome-recycling factor from Lactococcus lactis subsp. cremoris (strain SK11).